Reading from the N-terminus, the 1407-residue chain is ABC transporter B family member 6 (1407 aa).

The disordered stretch occupies residues 18 to 65 (LTPVSEVSEPPESPSPYLDPGAEHGGTGTAAQADDEEEMEEPEEMEPP). Over residues 50-63 (ADDEEEMEEPEEME) the composition is skewed to acidic residues. Helical transmembrane passes span 84–104 (VLMVFGSVAAAAHGTALIVYL), 139–159 (IVYIAGGVFISGWIEVSCWIL), 212–231 (VGNYIHNMATFISGLIIGFV), and 236–258 (IALITLATGPFIVAAGGISNIFL). The 294-residue stretch at 86–379 (MVFGSVAAAA…AATNFYSFDQ (294 aa)) folds into the ABC transmembrane type-1 1 domain. An N-linked (GlcNAc...) asparagine glycan is attached at Asn-291. 2 helical membrane passes run 310–330 (GILISLVQGLGLGFTYGLAIC) and 351–371 (GEIITALFAVILSGLGLNQAA). The ABC transporter 1 domain maps to 412–647 (IEFRNVYFSY…GNLYAELLKC (236 aa)). Position 447 to 454 (447 to 454 (GRNGSGKS)) interacts with ATP. N-linked (GlcNAc...) asparagine glycosylation is found at Asn-449 and Asn-663. Disordered regions lie at residues 670–696 (AERDSSAGRGFQEPSSPKMAKSPSLQR) and 709–815 (NSEE…DGQH). Asn-727 carries an N-linked (GlcNAc...) asparagine glycan. Residues 733 to 755 (VGEKEPTIKRQDSFEMRLPELPK) show a composition bias toward basic and acidic residues. The segment covering 761 to 770 (PQRQKSNGSD) has biased composition (polar residues). The N-linked (GlcNAc...) asparagine glycan is linked to Asn-767. One can recognise an ABC transmembrane type-1 2 domain in the interval 835–1123 (AVLGSIGAAI…PFGLAPYILK (289 aa)). The next 6 helical transmembrane spans lie at 840–860 (IGAAIFGSFNPLLAYVIALVV), 880–900 (LIIACMGIVTVVANFLQHFYF), 958–978 (IFIQDSFAVIVAILIGLLLGW), 982–1002 (LVALATLPVLTLSAIAQKLWL), 1061–1081 (IGFAFGFSQFLLFACNALLLW), and 1102–1122 (MVFSFATFALVEPFGLAPYIL). Positions 1158 to 1395 (IELKNIDFCY…NGLYVRLMQP (238 aa)) constitute an ABC transporter 2 domain. N-linked (GlcNAc...) asparagine glycosylation occurs at Asn-1178. 1193–1200 (GVSGSGKS) serves as a coordination point for ATP. Asn-1260 and Asn-1346 each carry an N-linked (GlcNAc...) asparagine glycan.

This sequence belongs to the ABC transporter superfamily. ABCB family. Multidrug resistance exporter (TC 3.A.1.201) subfamily. Expressed in aerial tissues.

It is found in the membrane. The enzyme catalyses (indol-3-yl)acetate(in) + ATP + H2O = (indol-3-yl)acetate(out) + ADP + phosphate + H(+). In terms of biological role, probable auxin efflux transporter that contributes, together with ABCB20 and in a FKBP42/TWD1-dependent manner, to the regulation of leaf position and morphology, internode distribution, roots development, and inflorescence organization, probably by modulating auxin repartition. This Arabidopsis thaliana (Mouse-ear cress) protein is ABC transporter B family member 6.